The following is a 731-amino-acid chain: Auxin response factor 3 (731 aa).

Residues 1–22 (MASSASSSSSPSSRPPLMALPS) are compositionally biased toward low complexity. Residues 1–41 (MASSASSSSSPSSRPPLMALPSFYRPPWPSERGGEQRATDC) are disordered. A DNA-binding region (TF-B3) is located at residues 191 to 293 (FCKTLTASDT…ELRLGVRRAT (103 aa)).

Belongs to the ARF family. As to quaternary structure, homo and heterodimers. Expressed in roots, culms, leaves and young panicles.

The protein resides in the nucleus. Auxin response factors (ARFs) are transcriptional factors that bind specifically to the DNA sequence 5'-TGTCTC-3' found in the auxin-responsive promoter elements (AuxREs). The sequence is that of Auxin response factor 3 (ARF3) from Oryza sativa subsp. japonica (Rice).